A 69-amino-acid chain; its full sequence is Pancreatic propolypeptide YG (69 aa).

It belongs to the NPY family.

It is found in the secreted. The sequence is that of Pancreatic propolypeptide YG from Lophius americanus (American angler).